The primary structure comprises 243 residues: Ubiquinone/menaquinone biosynthesis C-methyltransferase UbiE (243 aa).

S-adenosyl-L-methionine contacts are provided by residues Thr-69, Asp-90, and 116-117 (DA).

The protein belongs to the class I-like SAM-binding methyltransferase superfamily. MenG/UbiE family.

The catalysed reaction is a 2-demethylmenaquinol + S-adenosyl-L-methionine = a menaquinol + S-adenosyl-L-homocysteine + H(+). It carries out the reaction a 2-methoxy-6-(all-trans-polyprenyl)benzene-1,4-diol + S-adenosyl-L-methionine = a 5-methoxy-2-methyl-3-(all-trans-polyprenyl)benzene-1,4-diol + S-adenosyl-L-homocysteine + H(+). The protein operates within quinol/quinone metabolism; menaquinone biosynthesis; menaquinol from 1,4-dihydroxy-2-naphthoate: step 2/2. It functions in the pathway cofactor biosynthesis; ubiquinone biosynthesis. Functionally, methyltransferase required for the conversion of demethylmenaquinol (DMKH2) to menaquinol (MKH2) and the conversion of 2-polyprenyl-6-methoxy-1,4-benzoquinol (DDMQH2) to 2-polyprenyl-3-methyl-6-methoxy-1,4-benzoquinol (DMQH2). This is Ubiquinone/menaquinone biosynthesis C-methyltransferase UbiE from Burkholderia mallei (strain NCTC 10247).